A 369-amino-acid polypeptide reads, in one-letter code: 4-hydroxy-3-methylbut-2-en-1-yl diphosphate synthase (flavodoxin) (369 aa).

Residues Cys-270, Cys-273, Cys-305, and Glu-312 each coordinate [4Fe-4S] cluster.

This sequence belongs to the IspG family. It depends on [4Fe-4S] cluster as a cofactor.

It carries out the reaction (2E)-4-hydroxy-3-methylbut-2-enyl diphosphate + oxidized [flavodoxin] + H2O + 2 H(+) = 2-C-methyl-D-erythritol 2,4-cyclic diphosphate + reduced [flavodoxin]. It functions in the pathway isoprenoid biosynthesis; isopentenyl diphosphate biosynthesis via DXP pathway; isopentenyl diphosphate from 1-deoxy-D-xylulose 5-phosphate: step 5/6. Its function is as follows. Converts 2C-methyl-D-erythritol 2,4-cyclodiphosphate (ME-2,4cPP) into 1-hydroxy-2-methyl-2-(E)-butenyl 4-diphosphate. In Pseudomonas syringae pv. syringae (strain B728a), this protein is 4-hydroxy-3-methylbut-2-en-1-yl diphosphate synthase (flavodoxin).